Here is a 228-residue protein sequence, read N- to C-terminus: Protein CWC15 homolog A (228 aa).

Residues 1–126 (MTTAARPTFE…DEDSDDDTAA (126 aa)) form a disordered region. Positions 24–34 (SQLSKQYSSRD) are enriched in polar residues. Residues 52-84 (EEVRSRDFRRELEERERVVARDKNRDRPTREHT) are compositionally biased toward basic and acidic residues. Positions 102 to 124 (DADDPLTDEDGDEDSDEDSDDDT) are enriched in acidic residues. The stretch at 121-165 (DDDTAALLAELEKIKKERAEEKDRKELEQKAEEERIRMENILSGN) forms a coiled coil.

This sequence belongs to the CWC15 family. As to quaternary structure, identified in the spliceosome C complex. Component of the minor spliceosome, which splices U12-type introns.

It is found in the nucleus. In terms of biological role, involved in pre-mRNA splicing as component of the spliceosome. The polypeptide is Protein CWC15 homolog A (cwc15-a) (Xenopus laevis (African clawed frog)).